The chain runs to 777 residues: Endonuclease MutS2 (777 aa).

ATP is bound at residue 328–335 (GPNTGGKT). One can recognise a Smr domain in the interval 702–777 (LDLRGKRYEE…GSGATIVIFK (76 aa)).

This sequence belongs to the DNA mismatch repair MutS family. MutS2 subfamily. Homodimer. Binds to stalled ribosomes, contacting rRNA.

Endonuclease that is involved in the suppression of homologous recombination and thus may have a key role in the control of bacterial genetic diversity. Its function is as follows. Acts as a ribosome collision sensor, splitting the ribosome into its 2 subunits. Detects stalled/collided 70S ribosomes which it binds and splits by an ATP-hydrolysis driven conformational change. Acts upstream of the ribosome quality control system (RQC), a ribosome-associated complex that mediates the extraction of incompletely synthesized nascent chains from stalled ribosomes and their subsequent degradation. Probably generates substrates for RQC. This chain is Endonuclease MutS2, found in Streptococcus sanguinis (strain SK36).